The sequence spans 597 residues: Elongation factor 4 (597 aa).

The region spanning 2 to 184 (DHIRNFSIIA…ALVAKVPPPK (183 aa)) is the tr-type G domain. GTP-binding positions include 14–19 (DHGKST) and 131–134 (NKID).

The protein belongs to the TRAFAC class translation factor GTPase superfamily. Classic translation factor GTPase family. LepA subfamily.

The protein localises to the cell inner membrane. It catalyses the reaction GTP + H2O = GDP + phosphate + H(+). In terms of biological role, required for accurate and efficient protein synthesis under certain stress conditions. May act as a fidelity factor of the translation reaction, by catalyzing a one-codon backward translocation of tRNAs on improperly translocated ribosomes. Back-translocation proceeds from a post-translocation (POST) complex to a pre-translocation (PRE) complex, thus giving elongation factor G a second chance to translocate the tRNAs correctly. Binds to ribosomes in a GTP-dependent manner. The chain is Elongation factor 4 from Paraburkholderia phytofirmans (strain DSM 17436 / LMG 22146 / PsJN) (Burkholderia phytofirmans).